A 117-amino-acid chain; its full sequence is Large ribosomal subunit protein uL18 (117 aa).

Belongs to the universal ribosomal protein uL18 family. As to quaternary structure, part of the 50S ribosomal subunit; part of the 5S rRNA/L5/L18/L25 subcomplex. Contacts the 5S and 23S rRNAs.

In terms of biological role, this is one of the proteins that bind and probably mediate the attachment of the 5S RNA into the large ribosomal subunit, where it forms part of the central protuberance. This is Large ribosomal subunit protein uL18 from Methylococcus capsulatus (strain ATCC 33009 / NCIMB 11132 / Bath).